The following is a 528-amino-acid chain: Na(+)/H(+) antiporter NhaB (528 aa).

10 helical membrane passes run 28–50 (FLVI…VLVV), 67–87 (PGGL…SQVL), 98–118 (LLLV…LFVF), 140–160 (AFLS…AVAV), 240–260 (FFLR…FTCF), 305–325 (ALIG…VGLI), 350–370 (EEAL…GVII), 391–411 (LVIF…VFVG), 449–469 (ATPN…APLI), and 476–496 (MVWM…MAIE).

Belongs to the NhaB Na(+)/H(+) (TC 2.A.34) antiporter family.

It localises to the cell inner membrane. It catalyses the reaction 2 Na(+)(in) + 3 H(+)(out) = 2 Na(+)(out) + 3 H(+)(in). Na(+)/H(+) antiporter that extrudes sodium in exchange for external protons. This chain is Na(+)/H(+) antiporter NhaB, found in Shewanella frigidimarina (strain NCIMB 400).